A 291-amino-acid polypeptide reads, in one-letter code: Neugrin (291 aa).

A signal peptide spans 1–15 (MAVTLSLLLSGRVCA). The interval 27–49 (VADPGPIGREPDPDSDWEPEERE) is disordered. Over residues 39–49 (PDSDWEPEERE) the composition is skewed to acidic residues. Residue S41 is modified to Phosphoserine. N158 carries N-linked (GlcNAc...) asparagine glycosylation. A disordered region spans residues 224–270 (VAAPLGHPRELQKYSSDSESPRRTGNGALPSDQKLEELKAEEPGNFS). A compositionally biased stretch (basic and acidic residues) spans 256 to 265 (QKLEELKAEE).

Belongs to the neugrin family. As to quaternary structure, forms a regulatory protein-RNA complex, consisting of RCC1L, NGRN, RPUSD3, RPUSD4, TRUB2, FASTKD2 and 16S mt-rRNA. Interacts with 16S mt-rRNA; this interaction is direct.

The protein resides in the nucleus. The protein localises to the secreted. Its subcellular location is the mitochondrion membrane. Its function is as follows. Plays an essential role in mitochondrial ribosome biogenesis. As a component of a functional protein-RNA module, consisting of RCC1L, NGRN, RPUSD3, RPUSD4, TRUB2, FASTKD2 and 16S mitochondrial ribosomal RNA (16S mt-rRNA), controls 16S mt-rRNA abundance and is required for intra-mitochondrial translation of core subunits of the oxidative phosphorylation system. This is Neugrin (NGRN) from Pongo abelii (Sumatran orangutan).